Here is a 431-residue protein sequence, read N- to C-terminus: Cyclin-B2-4 (431 aa).

The disordered stretch occupies residues 1 to 30 (MGGSDENRHGVIGPMNRQQGGLRGGKVIPT).

This sequence belongs to the cyclin family. Cyclin AB subfamily. In terms of assembly, interacts with SMR11.

The polypeptide is Cyclin-B2-4 (CYCB2-4) (Arabidopsis thaliana (Mouse-ear cress)).